The following is a 330-amino-acid chain: Putative protein DDB_G0285185 (330 aa).

Residues 212–240 (NKLQNQVQSSPKLSSPITKNKEQIVSTTS) are disordered. Residues 214-240 (LQNQVQSSPKLSSPITKNKEQIVSTTS) are compositionally biased toward polar residues.

The protein is Putative protein DDB_G0285185 of Dictyostelium discoideum (Social amoeba).